Reading from the N-terminus, the 558-residue chain is Glucose-6-phosphate isomerase (558 aa).

N-acetylalanine is present on A2. At K12 the chain carries N6-acetyllysine. Residue K34 is modified to N6-(2-hydroxyisobutyryl)lysine. S107 carries the phosphoserine modification. Residue T109 is modified to Phosphothreonine. K142 is subject to N6-acetyllysine. Residue 159 to 160 (GS) participates in D-glucose 6-phosphate binding. A Phosphoserine; by CK2 modification is found at S185. Residue 210-215 (SKTFTT) participates in D-glucose 6-phosphate binding. T250 carries the phosphothreonine modification. Positions 354, 358, and 389 each coordinate D-glucose 6-phosphate. E358 acts as the Proton donor in catalysis. H389 is a catalytic residue. Residue K454 is modified to N6-acetyllysine; alternate. K454 is subject to N6-malonyllysine; alternate. K454 is subject to N6-succinyllysine; alternate. Position 455 is a phosphoserine (S455). K519 provides a ligand contact to D-glucose 6-phosphate. The active site involves K519.

The protein belongs to the GPI family. In terms of assembly, homodimer; in the catalytically active form. Monomer in the secreted form. Post-translationally, phosphorylation at Ser-185 by CK2 has been shown to decrease enzymatic activity and may contribute to secretion by a non-classical secretory pathway. ISGylated.

It localises to the cytoplasm. Its subcellular location is the secreted. The enzyme catalyses alpha-D-glucose 6-phosphate = beta-D-fructose 6-phosphate. Its pathway is carbohydrate degradation; glycolysis; D-glyceraldehyde 3-phosphate and glycerone phosphate from D-glucose: step 2/4. With respect to regulation, strongly inhibited by erythrose 4-phosphate. In terms of biological role, in the cytoplasm, catalyzes the conversion of glucose-6-phosphate to fructose-6-phosphate, the second step in glycolysis, and the reverse reaction during gluconeogenesis. Besides it's role as a glycolytic enzyme, also acts as a secreted cytokine: acts as an angiogenic factor (AMF) that stimulates endothelial cell motility. Acts as a neurotrophic factor, neuroleukin, for spinal and sensory neurons. It is secreted by lectin-stimulated T-cells and induces immunoglobulin secretion. The polypeptide is Glucose-6-phosphate isomerase (Homo sapiens (Human)).